The chain runs to 170 residues: Cytochrome b6-f complex subunit 4 (170 aa).

3 helical membrane-spanning segments follow: residues 46–66, 105–125, and 141–161; these read LLFM…GLAV, LLGI…PFIE, and TVFL…TLPL.

It belongs to the cytochrome b family. PetD subfamily. In terms of assembly, the 4 large subunits of the cytochrome b6-f complex are cytochrome b6, subunit IV (17 kDa polypeptide, PetD), cytochrome f and the Rieske protein, while the 4 small subunits are PetG, PetL, PetM and PetN. The complex functions as a dimer.

The protein resides in the cellular thylakoid membrane. Functionally, component of the cytochrome b6-f complex, which mediates electron transfer between photosystem II (PSII) and photosystem I (PSI), cyclic electron flow around PSI, and state transitions. This chain is Cytochrome b6-f complex subunit 4, found in Synechococcus sp. (strain JA-3-3Ab) (Cyanobacteria bacterium Yellowstone A-Prime).